The following is an 83-amino-acid chain: Small ribosomal subunit protein eS27 (83 aa).

A C4-type zinc finger spans residues 37–59 (CPGCFNITTVFSHAQTVVICGSC).

Belongs to the eukaryotic ribosomal protein eS27 family. As to quaternary structure, component of the small ribosomal subunit (SSU). Mature yeast ribosomes consist of a small (40S) and a large (60S) subunit. The 40S small subunit contains 1 molecule of ribosomal RNA (18S rRNA) and at least 33 different proteins. The large 60S subunit contains 3 rRNA molecules (25S, 5.8S and 5S rRNA) and at least 46 different proteins. Zn(2+) is required as a cofactor.

It localises to the cytoplasm. Its function is as follows. Component of the ribosome, a large ribonucleoprotein complex responsible for the synthesis of proteins in the cell. The small ribosomal subunit (SSU) binds messenger RNAs (mRNAs) and translates the encoded message by selecting cognate aminoacyl-transfer RNA (tRNA) molecules. The large subunit (LSU) contains the ribosomal catalytic site termed the peptidyl transferase center (PTC), which catalyzes the formation of peptide bonds, thereby polymerizing the amino acids delivered by tRNAs into a polypeptide chain. The nascent polypeptides leave the ribosome through a tunnel in the LSU and interact with protein factors that function in enzymatic processing, targeting, and the membrane insertion of nascent chains at the exit of the ribosomal tunnel. This chain is Small ribosomal subunit protein eS27 (rps27), found in Schizosaccharomyces pombe (strain 972 / ATCC 24843) (Fission yeast).